Reading from the N-terminus, the 427-residue chain is Glutamate-1-semialdehyde 2,1-aminomutase (427 aa).

The residue at position 265 (K265) is an N6-(pyridoxal phosphate)lysine.

Belongs to the class-III pyridoxal-phosphate-dependent aminotransferase family. HemL subfamily. In terms of assembly, homodimer. It depends on pyridoxal 5'-phosphate as a cofactor.

It is found in the cytoplasm. The catalysed reaction is (S)-4-amino-5-oxopentanoate = 5-aminolevulinate. Its pathway is porphyrin-containing compound metabolism; protoporphyrin-IX biosynthesis; 5-aminolevulinate from L-glutamyl-tRNA(Glu): step 2/2. This is Glutamate-1-semialdehyde 2,1-aminomutase from Pseudomonas savastanoi pv. phaseolicola (strain 1448A / Race 6) (Pseudomonas syringae pv. phaseolicola (strain 1448A / Race 6)).